The sequence spans 176 residues: Peptide deformylase (176 aa).

Fe cation is bound by residues Cys97 and His139. Glu140 is an active-site residue. Fe cation is bound at residue His143.

Belongs to the polypeptide deformylase family. The cofactor is Fe(2+).

It carries out the reaction N-terminal N-formyl-L-methionyl-[peptide] + H2O = N-terminal L-methionyl-[peptide] + formate. Functionally, removes the formyl group from the N-terminal Met of newly synthesized proteins. Requires at least a dipeptide for an efficient rate of reaction. N-terminal L-methionine is a prerequisite for activity but the enzyme has broad specificity at other positions. The protein is Peptide deformylase of Thermomicrobium roseum (strain ATCC 27502 / DSM 5159 / P-2).